A 221-amino-acid polypeptide reads, in one-letter code: PKHD-type hydroxylase P9515_13321 (221 aa).

One can recognise a Fe2OG dioxygenase domain in the interval 80-174 (TIHGIMFTKS…RLVCVGWIES (95 aa)). The Fe cation site is built by histidine 98, aspartate 100, and histidine 155. Arginine 165 is a binding site for 2-oxoglutarate.

The cofactor is Fe(2+). Requires L-ascorbate as cofactor.

This is PKHD-type hydroxylase P9515_13321 from Prochlorococcus marinus (strain MIT 9515).